The chain runs to 259 residues: Peroxisomal membrane protein 11B (259 aa).

K43 carries the N6-acetyllysine modification. The tract at residues 211-259 (VVRNACDLFIPLDKLGLWRCGPGIVGLCGLVSSILSILTLIYPWLRLKP) is interaction with PEX19, PEX11G and FIS1 and peroxisome targeting. The helical transmembrane segment at 234–254 (IVGLCGLVSSILSILTLIYPW) threads the bilayer.

It belongs to the peroxin-11 family. Homodimer. Heterodimer with PEX11G. Interacts with PEX19. Interacts with FIS1.

It localises to the peroxisome membrane. Its function is as follows. Involved in peroxisomal proliferation. May regulate peroxisome division by recruiting the dynamin-related GTPase DNM1L to the peroxisomal membrane. Promotes membrane protrusion and elongation on the peroxisomal surface. This Pongo abelii (Sumatran orangutan) protein is Peroxisomal membrane protein 11B (PEX11B).